The chain runs to 116 residues: Spexin (116 aa).

Residues 1-26 (MKGPSILAVAALALLLVLSVLENSSG) form the signal peptide. Residues 27-35 (APQRLSEKR) constitute a propeptide that is removed on maturation. Glutamine amide is present on Gln-49. 2 consecutive propeptides follow at residues 50–116 (GHRF…RFYW) and 74–116 (PNLQ…RFYW). A compositionally biased stretch (basic and acidic residues) spans 56–73 (DQSRRKELADRPPPERRN). The tract at residues 56-75 (DQSRRKELADRPPPERRNPN) is disordered.

It belongs to the spexin family. Widely expressed; predominantly expressed in epithelial cells in the skin, respiratory, digestive, urinary and reproductive systems, retina, adrenal gland and various brain regions. In the adrenal gland, expressed in parenchymal cells of the cortex and in ganglionic cells and intermingled cortical cells of the medulla. Expressed in the type I glomic cells within the carotid body (at protein level). Widely expressed. Strongly expressed in esophagus, liver, pancreas, kidney, brain, hypothalamus, thyroid and ovary. Expressed in the zona glomerulosa (ZG) and zona fasciculata/reticularis (ZF/R) of the adrenal gland. Also expressed in stomach, lung, skeletal muscle, heart, uterus, spleen, adrenal gland and testis. Weakly expressed in small intestine, thymus, urinary bladder and adenohypophysis. In the brain, is expressed in the Barrington's nucleus, with lesser amount in the ventrolateral caudal periaqueductal gray (PAG) and in the mesopontine tegmentum.

It localises to the secreted. Its subcellular location is the extracellular space. The protein localises to the cytoplasmic vesicle. The protein resides in the secretory vesicle. Plays a role as a central modulator of cardiovascular and renal function and nociception. Also plays a role in energy metabolism and storage. Inhibits adrenocortical cell proliferation with minor stimulation on corticosteroid release. In terms of biological role, acts as a ligand for galanin receptors GALR2 and GALR3. Intracerebroventricular administration of the peptide induces an increase in arterial blood pressure, a decrease in both heart rate and renal excretion and delayed natriuresis. Intraventricular administration of the peptide induces antinociceptive activity. Intraperitoneal administration of the peptide induces a reduction in food consumption and body weight. Inhibits long chain fatty acid uptake into adipocytes. Also induces contraction of muscarinic-like stomach smooth muscles. Its function is as follows. Intracerebroventricular administration of the peptide induces a decrease in heart rate, but no change in arterial pressure, and an increase in urine flow rate. Intraventricular administration of the peptide induces antinociceptive activity. In Rattus norvegicus (Rat), this protein is Spexin (SPX).